The following is a 454-amino-acid chain: Probable glycine dehydrogenase (decarboxylating) subunit 1 (454 aa).

It belongs to the GcvP family. N-terminal subunit subfamily. As to quaternary structure, the glycine cleavage system is composed of four proteins: P, T, L and H. In this organism, the P 'protein' is a heterodimer of two subunits.

It carries out the reaction N(6)-[(R)-lipoyl]-L-lysyl-[glycine-cleavage complex H protein] + glycine + H(+) = N(6)-[(R)-S(8)-aminomethyldihydrolipoyl]-L-lysyl-[glycine-cleavage complex H protein] + CO2. Functionally, the glycine cleavage system catalyzes the degradation of glycine. The P protein binds the alpha-amino group of glycine through its pyridoxal phosphate cofactor; CO(2) is released and the remaining methylamine moiety is then transferred to the lipoamide cofactor of the H protein. This Sorangium cellulosum (strain So ce56) (Polyangium cellulosum (strain So ce56)) protein is Probable glycine dehydrogenase (decarboxylating) subunit 1.